A 757-amino-acid chain; its full sequence is Two pore calcium channel protein 1 (757 aa).

Over 1–94 (MRERGEMREA…NDTRFERAMR (94 aa)) the chain is Cytoplasmic. Residues 24–48 (HSHGSGSSGTGSHTSGGGGGWRGSR) form a disordered region. The span at 29-45 (GSSGTGSHTSGGGGGWR) shows a compositional bias: gly residues. The helical transmembrane segment at 95-115 (FYFVYLRLDWLWSLNLFALIL) threads the bilayer. At 116 to 152 (LNFLEKPLWCRGYSQHACDQRDLYFLGQLPYLSKTES) the chain is on the extracellular side. Residues 153–173 (LIYEGLTLVILVMDIFYPLSY) form a helical membrane-spanning segment. At 174 to 188 (EGLNLFWKNTINKLK) the chain is on the cytoplasmic side. Residues 189-209 (VLLLFILACDILVFAFSPQPF) form a helical membrane-spanning segment. Position 210 (Arg210) is a topological domain, extracellular. The helical; Voltage-sensor transmembrane segment at 211-228 (VAPYIRVAFLIMNIRELR) threads the bilayer. Over 229–233 (MCAVT) the chain is Cytoplasmic. A helical membrane pass occupies residues 234–254 (LVGMVGTYLNVLALSLLFLLF). Residues 255–270 (ASWLAYVTFEDTPQGK) are Extracellular-facing. An intramembrane region (pore-forming) is located at residues 271–285 (TVFSSYGTTLYQMFI). The Extracellular portion of the chain corresponds to 286-308 (LFTTSNNPDVWVPAYKSSRWSSL). A helical transmembrane segment spans residues 309–329 (FFIVYVLLGVYFLTNLILAVI). Residues 330–453 (YDSFKEQLAK…LCEWLKSFVR (124 aa)) are Cytoplasmic-facing. 2 EF-hand domains span residues 347–382 (TRKSILEKAFGIIDATGQGYLNKEQCLSLLDELNKY) and 388–423 (TSREDFELIFAELDQSGDFKVTSEEFATLCNTIAIK). Residues 454 to 474 (SPLFEYIVIFVLLMNLVAVII) form a helical membrane-spanning segment. The Extracellular portion of the chain corresponds to 475 to 493 (ETTLDIENSSSQKVWQEVE). The N-linked (GlcNAc...) asparagine glycan is linked to Asn482. Residues 494–514 (FVFGWIYVIEMALKIFSLGFG) form a helical membrane-spanning segment. Topologically, residues 515 to 523 (AYWMEGQNK) are cytoplasmic. The chain crosses the membrane as a helical span at residues 524 to 544 (FDFVLTWTIFIGETLTFAFPS). Residues 545-553 (KLSFLSNGE) lie on the Extracellular side of the membrane. A helical; Voltage-sensor membrane pass occupies residues 554 to 571 (WIRYLLLGRMLRLTRILL). The Cytoplasmic portion of the chain corresponds to 572–595 (QVRRFRAFVATFFTLMSSLMPYLG). Residues 596–616 (IVFCTLCIYCSLGLQIFGGIV) traverse the membrane as a helical segment. Residues 617–640 (YAGNPTLEETDLFSNDYLLFNFND) are Extracellular-facing. An intramembrane region (pore-forming) is located at residues 641–655 (YPSGMVTLFNLLVMG). The Extracellular portion of the chain corresponds to 656-676 (NWQAWMESYRQLTGSYWSLIY). A helical membrane pass occupies residues 677–697 (FVSFYLISVLLLLNLIVAFVL). The Cytoplasmic segment spans residues 698–757 (EAFFAEMELEKDGEADIQDPTLEGRNRRRSVRVRTKGTMVDILLHHMLSNELDGSQNRDQ).

The protein belongs to the calcium channel alpha-1 subunit (TC 1.A.1.11) family. Two pore calcium channel subfamily. In terms of assembly, homodimer. As to expression, expressed in shoot, mature leaf, cultured cells, and at lower level in roots.

The protein resides in the membrane. Inhibited by the VDCC blocker verapamil in yeast cells. Channel activity may be down-regulated by cytosolic Ca(2+) in rice cells. Inhibited by Al(3+). May function as one of the major voltage-gated Ca(2+) channel (VDCC) across the plasma membrane. May be involved in the regulation of cytosolic Ca(2+) and in growth and development. Acts as the major ROS-responsive Ca(2+) channel and is the possible target of Al-dependent inhibition. Determines sensitivity to T.viride xylanase elicitor. Plays a regulatory role in elicitor-induced defense responses and hypersensitive cell death. In Oryza sativa subsp. japonica (Rice), this protein is Two pore calcium channel protein 1 (TPC1).